A 152-amino-acid chain; its full sequence is UPF0178 protein YaiI (152 aa).

The protein belongs to the UPF0178 family.

In Shigella flexneri, this protein is UPF0178 protein YaiI.